The primary structure comprises 332 residues: Glycerol-3-phosphate dehydrogenase [NAD(P)+] (332 aa).

NADPH-binding residues include Trp-11, Arg-30, and Lys-108. Residues Lys-108, Gly-137, and Ser-139 each coordinate sn-glycerol 3-phosphate. Ala-141 is an NADPH binding site. Sn-glycerol 3-phosphate-binding residues include Lys-192, Asp-245, Ser-255, Arg-256, and Asn-257. Catalysis depends on Lys-192, which acts as the Proton acceptor. Arg-256 is an NADPH binding site. NADPH-binding residues include Val-280 and Glu-282.

It belongs to the NAD-dependent glycerol-3-phosphate dehydrogenase family.

The protein resides in the cytoplasm. The enzyme catalyses sn-glycerol 3-phosphate + NAD(+) = dihydroxyacetone phosphate + NADH + H(+). It carries out the reaction sn-glycerol 3-phosphate + NADP(+) = dihydroxyacetone phosphate + NADPH + H(+). It participates in membrane lipid metabolism; glycerophospholipid metabolism. Catalyzes the reduction of the glycolytic intermediate dihydroxyacetone phosphate (DHAP) to sn-glycerol 3-phosphate (G3P), the key precursor for phospholipid synthesis. This Burkholderia mallei (strain ATCC 23344) protein is Glycerol-3-phosphate dehydrogenase [NAD(P)+].